We begin with the raw amino-acid sequence, 80 residues long: Putative membrane protein insertion efficiency factor (80 aa).

Positions 61–80 (KTGKDPVPDRFSLKRNQEGE) are disordered. The span at 62–80 (TGKDPVPDRFSLKRNQEGE) shows a compositional bias: basic and acidic residues.

It belongs to the UPF0161 family.

The protein localises to the cell membrane. Its function is as follows. Could be involved in insertion of integral membrane proteins into the membrane. The chain is Putative membrane protein insertion efficiency factor from Streptococcus pneumoniae (strain P1031).